The primary structure comprises 58 residues: Attractin (58 aa).

3 disulfides stabilise this stretch: cysteine 4–cysteine 41, cysteine 13–cysteine 33, and cysteine 20–cysteine 26. Asparagine 8 carries an N-linked (GlcNAc...) asparagine glycan.

In terms of tissue distribution, produced by the albumen gland of the egg cordons.

The protein localises to the secreted. Water-borne pheromone that attract the marine mollusk Aplysia into breeding aggregations and coordinate male and female reproductive behavior within the aggregation. The protein is Attractin (ATT) of Aplysia fasciata (Mottled sea hare).